Here is a 614-residue protein sequence, read N- to C-terminus: uncharacterized protein (614 aa).

Transmembrane regions (helical) follow at residues 41 to 61, 87 to 107, 157 to 177, and 178 to 198; these read GWIFLLAILTVGTGVMEAVLF, LIGMAALLLISIVWGFLASAV, DTVLTLANMFVYVLVYFITSG, and VVLVALDSWFLLPFITWIILF. One can recognise an ABC transmembrane type-1 domain in the interval 43–330; sequence IFLLAILTVG…IMWESARLFE (288 aa). Residues 364 to 603 enclose the ABC transporter domain; the sequence is IKFNDITFAY…NGLYAKLWNH (240 aa). ATP is bound at residue 397-404; sequence GRSGAGKS.

This sequence belongs to the ABC transporter superfamily.

The protein resides in the cell membrane. This is an uncharacterized protein from Haemophilus influenzae (strain ATCC 51907 / DSM 11121 / KW20 / Rd).